We begin with the raw amino-acid sequence, 67 residues long: Probable Sec-independent protein translocase protein TatE (67 aa).

A helical membrane pass occupies residues 4 to 21 (ISITKLLVIAALVVLLFG). Residues 44 to 67 (NDDDTGAKTPAASEAPAERLSHKE) form a disordered region.

The protein belongs to the TatA/E family. TatE subfamily.

The protein resides in the cell inner membrane. Part of the twin-arginine translocation (Tat) system that transports large folded proteins containing a characteristic twin-arginine motif in their signal peptide across membranes. TatE shares overlapping functions with TatA. The chain is Probable Sec-independent protein translocase protein TatE from Cronobacter sakazakii (strain ATCC BAA-894) (Enterobacter sakazakii).